Consider the following 317-residue polypeptide: tRNA-cytidine(32) 2-sulfurtransferase (317 aa).

Residues 46–51 (SGGKDS) carry the PP-loop motif motif. The [4Fe-4S] cluster site is built by C121, C124, and C212.

This sequence belongs to the TtcA family. Homodimer. Requires Mg(2+) as cofactor. [4Fe-4S] cluster is required as a cofactor.

It localises to the cytoplasm. The enzyme catalyses cytidine(32) in tRNA + S-sulfanyl-L-cysteinyl-[cysteine desulfurase] + AH2 + ATP = 2-thiocytidine(32) in tRNA + L-cysteinyl-[cysteine desulfurase] + A + AMP + diphosphate + H(+). Its pathway is tRNA modification. In terms of biological role, catalyzes the ATP-dependent 2-thiolation of cytidine in position 32 of tRNA, to form 2-thiocytidine (s(2)C32). The sulfur atoms are provided by the cysteine/cysteine desulfurase (IscS) system. The chain is tRNA-cytidine(32) 2-sulfurtransferase from Shewanella loihica (strain ATCC BAA-1088 / PV-4).